Reading from the N-terminus, the 374-residue chain is Queuine tRNA-ribosyltransferase (374 aa).

The Proton acceptor role is filled by D89. Substrate-binding positions include 89–93 (DSGGF), D143, Q187, and G214. Residues 245 to 251 (GVGKPED) form an RNA binding region. The active-site Nucleophile is D264. Residues 269–273 (TRNAR) are RNA binding; important for wobble base 34 recognition. C302, C304, C307, and H333 together coordinate Zn(2+).

The protein belongs to the queuine tRNA-ribosyltransferase family. In terms of assembly, homodimer. Within each dimer, one monomer is responsible for RNA recognition and catalysis, while the other monomer binds to the replacement base PreQ1. It depends on Zn(2+) as a cofactor.

It catalyses the reaction 7-aminomethyl-7-carbaguanine + guanosine(34) in tRNA = 7-aminomethyl-7-carbaguanosine(34) in tRNA + guanine. It functions in the pathway tRNA modification; tRNA-queuosine biosynthesis. Functionally, catalyzes the base-exchange of a guanine (G) residue with the queuine precursor 7-aminomethyl-7-deazaguanine (PreQ1) at position 34 (anticodon wobble position) in tRNAs with GU(N) anticodons (tRNA-Asp, -Asn, -His and -Tyr). Catalysis occurs through a double-displacement mechanism. The nucleophile active site attacks the C1' of nucleotide 34 to detach the guanine base from the RNA, forming a covalent enzyme-RNA intermediate. The proton acceptor active site deprotonates the incoming PreQ1, allowing a nucleophilic attack on the C1' of the ribose to form the product. After dissociation, two additional enzymatic reactions on the tRNA convert PreQ1 to queuine (Q), resulting in the hypermodified nucleoside queuosine (7-(((4,5-cis-dihydroxy-2-cyclopenten-1-yl)amino)methyl)-7-deazaguanosine). In Shewanella loihica (strain ATCC BAA-1088 / PV-4), this protein is Queuine tRNA-ribosyltransferase.